Reading from the N-terminus, the 408-residue chain is Peptidase T (408 aa).

Histidine 78 provides a ligand contact to Zn(2+). Aspartate 80 is an active-site residue. Residue aspartate 140 coordinates Zn(2+). Glutamate 173 acts as the Proton acceptor in catalysis. Residues glutamate 174, aspartate 196, and histidine 379 each coordinate Zn(2+).

This sequence belongs to the peptidase M20B family. Zn(2+) serves as cofactor.

Its subcellular location is the cytoplasm. It catalyses the reaction Release of the N-terminal residue from a tripeptide.. Cleaves the N-terminal amino acid of tripeptides. The chain is Peptidase T from Salmonella arizonae (strain ATCC BAA-731 / CDC346-86 / RSK2980).